The following is a 338-amino-acid chain: DNA-directed RNA polymerase subunit alpha (338 aa).

The tract at residues 1–234 is alpha N-terminal domain (alpha-NTD); it reads MIQKNWQELT…DQLNVFVNFE (234 aa). The interval 250–338 is alpha C-terminal domain (alpha-CTD); it reads FNPALLKKVD…DLAKRFEEHY (89 aa).

This sequence belongs to the RNA polymerase alpha chain family. In terms of assembly, homodimer. The RNAP catalytic core consists of 2 alpha, 1 beta, 1 beta' and 1 omega subunit. When a sigma factor is associated with the core the holoenzyme is formed, which can initiate transcription.

The enzyme catalyses RNA(n) + a ribonucleoside 5'-triphosphate = RNA(n+1) + diphosphate. Functionally, DNA-dependent RNA polymerase catalyzes the transcription of DNA into RNA using the four ribonucleoside triphosphates as substrates. In Methylocella silvestris (strain DSM 15510 / CIP 108128 / LMG 27833 / NCIMB 13906 / BL2), this protein is DNA-directed RNA polymerase subunit alpha.